The primary structure comprises 140 residues: Phosphopantetheine adenylyltransferase (140 aa).

Residue serine 9 participates in substrate binding. ATP contacts are provided by residues 9 to 10 and histidine 17; that span reads SF. 3 residues coordinate substrate: lysine 41, threonine 74, and arginine 88. ATP-binding positions include 89–91, glutamate 99, and 124–130; these read GLR and KRSLSST.

This sequence belongs to the bacterial CoaD family. In terms of assembly, homohexamer. It depends on Mg(2+) as a cofactor.

The protein resides in the cytoplasm. The enzyme catalyses (R)-4'-phosphopantetheine + ATP + H(+) = 3'-dephospho-CoA + diphosphate. It participates in cofactor biosynthesis; coenzyme A biosynthesis; CoA from (R)-pantothenate: step 4/5. Reversibly transfers an adenylyl group from ATP to 4'-phosphopantetheine, yielding dephospho-CoA (dPCoA) and pyrophosphate. The polypeptide is Phosphopantetheine adenylyltransferase (Mycoplasma mycoides subsp. mycoides SC (strain CCUG 32753 / NCTC 10114 / PG1)).